A 1296-amino-acid polypeptide reads, in one-letter code: MAQTPDDISCELRGEITRFLWPKEAELLLKTWLPQEGAEQSHILALLRWRAYLLHTCLPLRVDCTFSYLEVQAMALQETPPRVTFELESLPELVLEFPCVAALEQLAQHVAAAIKKVFPRSTLGKLFRKPTPSSLLARLERSHPLESTIPSSPCGGFLETYEALCDYNGFPFREEIQWDVDTIYHRQGCRHFCLGDFSHFGSRDLALSVAALSYNLWFRRLSCEDMKLSLEVSEQILHMTSQSSYLEELVLEACGLRGDFVRRLAQALAGHFNSGLRELSLSGNLLDDRGMRALGRALATNATFDSTLTHLDLSGNPGALGPSQDSGGLYTFLSRPNVLAYLNLAGTDATLGTLFTALAGGCCSSLTHLEASRNIFSRMKSQAAPAALQRFLGGTRMLRHLGLAGCKLPPEALRALLEGLALNTQIHDLHLDLSACELRSVGAQVIQDLVCDAGALSSLDLSDNGFGSDMVTLVLAIGRSRSLKHVALGRNFNVRCKETLDDVLHRIAQLMQDDDCPLQSLSVAESRLKQGASILIRALGTNPKLTALDISGNAIGDAGAKMLAKALRVNTRLRSVIWDRNNTSALGLLDVAQALEQNHSLKSMPLPLNDVTQAHRSRPELTTRAVHQIQACLWRNNQVDSTSDLKPCLQPLGLISDHSEQEVNELCQSVQEHMELLGCGAGPQGEVAVHQAEDAIQNANFSLSILPILYEAGRSPSHHWQLQQKLESLLGQVGEICRQDIQDFTQTTLDTTRSLCPQMLQTPGWRKQLEGVLVGSGGLPELLPEHLLQDAFSRLRDMRLSITGTLAESIVAQALAGLHAARDRLVERLTQQAPVTMAPAVPPLGGNELSPLETGGLEELFFPTEKEEEREKVLLRKRNGTPSWQLRGKMQSRRLGRLHAVAEKHWAAGPRDTPASAVYQRVDVCVGWVPPALLQEGNGLTARVDEGVEEFFSKRLIQQDHFWAPEEDPATEGGATPVPRTLRKKLGTLFAFKKPRSTRGPRPDLETSPGAAARARKSTLGDLLRPPARPGRGEEPGGAEGGTSSPDPARRNRPRYTRESKAYSMILLPAEEEAAVGTRPDKRRPLERGDTELAPSFEQRVQVMLQRIGVSRASGGAESKRKQSKDGEIKKAGSDGDIMDSSTETPPISIKSRTHSVSADPSCRPGPGGQGPESATWKTLGQQLNAELRGRGWGQQDGPGPPSPCPSPSPRRTSPAPDILSLPEDPCLGPRNEERPLRLQRSPVLKRRPKLEAPPSPSLGSGLGSKPLPPYPTEPSSPERSPPSPATDQRGGGPNP.

15 LRR repeats span residues 63 to 87, 88 to 110, 248 to 271, 273 to 296, 305 to 328, 363 to 386, 395 to 415, 426 to 448, 453 to 477, 480 to 506, 515 to 538, 542 to 565, 570 to 594, 598 to 621, and 836 to 859; these read DCTF…TFEL, ESLP…AQHV, ELVL…LAGH, NSGL…ALGR, DSTL…DSGG, CSSL…AAPA, TRML…ALRA, IHDL…VIQD, AGAL…VLAI, SRSL…VLHR, DCPL…LIRA, NPKL…MLAK, NTRL…VAQA, NHSL…RPEL, and TMAP…GLEE. Residues 507 to 601 form a tropomodulin-like region; sequence IAQLMQDDDC…AQALEQNHSL (95 aa). Residues 975–1002 are necessary for localization at the cell membrane; sequence ATPVPRTLRKKLGTLFAFKKPRSTRGPR. A disordered region spans residues 988 to 1296; that stretch reads TLFAFKKPRS…TDQRGGGPNP (309 aa). S1008 is modified (phosphoserine). Composition is skewed to basic and acidic residues over residues 1079–1091 and 1118–1134; these read RPDK…RGDT and ESKR…KAGS. A Phosphoserine modification is found at S1134. T1145 is subject to Phosphothreonine. Positions 1176–1185 are enriched in polar residues; that stretch reads TWKTLGQQLN. R1191 carries the post-translational modification Omega-N-methylarginine. Pro residues-rich tracts occupy residues 1199-1209 and 1267-1285; these read PGPPSPCPSPS and PLPP…PPSP. Phosphoserine is present on residues S1203 and S1281.

The protein belongs to the CARMIL family. Forms homodimers. Interacts (via C-terminus) with heterodimeric capping protein (CP); the interaction inhibits CP activity and hence promotes actin polymerization at the barbed end of actin filaments.

The protein resides in the cytoplasm. It localises to the cytoskeleton. The protein localises to the cell membrane. It is found in the cell projection. Its subcellular location is the lamellipodium. The protein resides in the ruffle. Its function is as follows. Cell membrane-cytoskeleton-associated protein that plays a role in the regulation of actin polymerization at the barbed end of actin filaments. Prevents F-actin heterodimeric capping protein (CP) activity at the leading edges of migrating cells, and hence generates uncapped barbed ends and enhances actin polymerization. Plays a role in cell protrusion formations; involved in cell polarity, lamellipodial assembly, membrane ruffling and macropinosome formations. Involved as well in cell migration and invadopodia formation during wound healing. Required for CD28-mediated stimulation of NF-kappa-B signaling, involved in naive T cells activation, maturation into T memory cells, and differentiation into T helper cells. Required for CD28-mediated differentiation of T regulatory cells. In Mus musculus (Mouse), this protein is Capping protein, Arp2/3 and myosin-I linker protein 2.